Reading from the N-terminus, the 312-residue chain is MIIVTGGAGFIGSNIVKALNDEGYTDILVVDNLKDGTKFVNLVDLNIADYMDKEDFIASIVAGDDFGDIDAVFHEGACSSTTEWDGKYMMDNNYQYSKELLHYCLDRQIPFLYASSAATYGGRTDHFIEERKYEAPLNVYGYSKFLFDEYVRQILPEAQSMVCGFRYFNVYGPREGHKGSMASVAFHLNTQVNDGQNPKLFEGSETFQRDFIYVGDVAAVNLWFWRNNVSGIYNCGTGRAESFQAVADAVIAYHNDKDLSVEHIEFPEKLKGRYQAFTQADLTNLRKAGYSAPFKTVAEGVALYMQWLNQDK.

Residues 10 to 11, 31 to 32, lysine 38, lysine 53, 75 to 79, and asparagine 92 contribute to the NADP(+) site; these read FI, DN, and EGACS. Catalysis depends on tyrosine 140, which acts as the Proton acceptor. Lysine 144 is an NADP(+) binding site. Residue asparagine 169 participates in substrate binding. Residues valine 170 and lysine 178 each contribute to the NADP(+) site. Lysine 178 functions as the Proton acceptor in the catalytic mechanism. Substrate is bound by residues serine 180, histidine 187, 201-204, arginine 209, and tyrosine 274; that span reads FEGS.

Belongs to the NAD(P)-dependent epimerase/dehydratase family. HldD subfamily. In terms of assembly, homopentamer. NADP(+) is required as a cofactor.

It catalyses the reaction ADP-D-glycero-beta-D-manno-heptose = ADP-L-glycero-beta-D-manno-heptose. It functions in the pathway nucleotide-sugar biosynthesis; ADP-L-glycero-beta-D-manno-heptose biosynthesis; ADP-L-glycero-beta-D-manno-heptose from D-glycero-beta-D-manno-heptose 7-phosphate: step 4/4. Its function is as follows. Catalyzes the interconversion between ADP-D-glycero-beta-D-manno-heptose and ADP-L-glycero-beta-D-manno-heptose via an epimerization at carbon 6 of the heptose. This Proteus mirabilis (strain HI4320) protein is ADP-L-glycero-D-manno-heptose-6-epimerase.